A 111-amino-acid polypeptide reads, in one-letter code: Inner membrane protein YdgC (111 aa).

At 1 to 26 the chain is on the cytoplasmic side; that stretch reads MGLVIKAALGALVVLLIGVLAKTKNY. The helical transmembrane segment at 27-47 threads the bilayer; it reads YIAGLIPLFPTFALIAHYIVA. Residues 48–58 are Periplasmic-facing; the sequence is SERGIEALRAT. Residues 59-79 form a helical membrane-spanning segment; it reads IIFSMWSIIPYFVYLVSLWYF. At 80 to 87 the chain is on the cytoplasmic side; it reads TGMMRLPA. Residues 88–108 form a helical membrane-spanning segment; the sequence is AFVGSVACWGISAWVLIICWI. Topologically, residues 109 to 111 are periplasmic; sequence KLH.

This sequence to P.aeruginosa GlpM.

It localises to the cell inner membrane. The polypeptide is Inner membrane protein YdgC (ydgC) (Escherichia coli O157:H7).